A 538-amino-acid chain; its full sequence is SWM histone demethylase complex subunit phf2 (538 aa).

Disordered stretches follow at residues 28-47 (RFPN…NQNG), 98-150 (EIES…SSPL), and 198-222 (TKSG…RRRG). Over residues 98–111 (EIESSKNQETDAKS) the composition is skewed to basic and acidic residues. A PHD-type zinc finger spans residues 232–288 (AMKCSVCQRLQSPPKNRIVFCDGCNTPFHQLCHEPYISDELLDSPNGEWFCDDCIRR). A compositionally biased stretch (polar residues) spans 367–392 (GDQYLSLNNGTESQSKTTKHSTSLPS). The segment at 367–396 (GDQYLSLNNGTESQSKTTKHSTSLPSTEPV) is disordered.

As to quaternary structure, component of the SWM histone demethylase complex composed of at least lsd1, lsd2, phf1 and phf2.

The protein resides in the nucleus. In terms of biological role, component of the SWM histone demethylase complex that specifically demethylates H3K9me2, a specific tag for epigenetic transcriptional activation, thereby acting as a corepressor. Has a role in regulating heterochromatin propagation and euchromatic transcription. The protein is SWM histone demethylase complex subunit phf2 (phf2) of Schizosaccharomyces pombe (strain 972 / ATCC 24843) (Fission yeast).